The primary structure comprises 208 residues: Fibroblast growth factor 10 (208 aa).

An N-terminal signal peptide occupies residues 1–37 (MWKWILTHCASAFPHLPGCCCCCFLLLFLVSSVPVTC). N-linked (GlcNAc...) asparagine glycans are attached at residues N51 and N196.

The protein belongs to the heparin-binding growth factors family. As to quaternary structure, interacts with FGFR1 and FGFR2. Interacts with FGFBP1.

The protein localises to the secreted. Its function is as follows. Plays an important role in the regulation of embryonic development, cell proliferation and cell differentiation. Required for normal branching morphogenesis. May play a role in wound healing. This is Fibroblast growth factor 10 (FGF10) from Homo sapiens (Human).